The following is a 387-amino-acid chain: Protoheme IX farnesyltransferase, mitochondrial (387 aa).

Transmembrane regions (helical) follow at residues 95–115 (LTVL…YPGL), 117–137 (FNTL…ANAF), 183–203 (FLVN…YMGI), 212–232 (IVNT…GWAA), 242–262 (PGGL…FNAF), 284–306 (ALNA…AYIS), 311–330 (GPWY…ARAW), and 345–365 (FFAS…CHMI).

Belongs to the UbiA prenyltransferase family.

It is found in the mitochondrion membrane. The catalysed reaction is heme b + (2E,6E)-farnesyl diphosphate + H2O = Fe(II)-heme o + diphosphate. Converts protoheme IX and farnesyl diphosphate to heme O. This Schizosaccharomyces pombe (strain 972 / ATCC 24843) (Fission yeast) protein is Protoheme IX farnesyltransferase, mitochondrial (cox10).